The chain runs to 287 residues: MGLLQDYSQRREEGEGRGSNFTRFSCWSCDFCRCLCNAEIAGESGGKVCCCGGKGGGPDQHSETRSCDNSGSWGRYGLAAFAPCSSLRLPAYLHLHEIQKIVIIFYATKIMGRHLTVFIIALAAVFAACAEEKEMAKSLTVKSAFENGGKIPAKYTCDGEDISPPLYIEGLREDVKSLVIICEDPDAPMGVFTHWIAWNVEPTSEIPENVPKTKFVDEPKMVQGRNDFGKVGYNGPCPPSGEHRYYFRIYAIDTLLQGDYSRQELLRAIEGHILQYGEIYGLYSRSR.

It belongs to the UPF0098 family.

The protein is UPF0098 protein AF_1698 of Archaeoglobus fulgidus (strain ATCC 49558 / DSM 4304 / JCM 9628 / NBRC 100126 / VC-16).